Consider the following 2537-residue polypeptide: Histone-lysine N-methyltransferase SETD2 (2537 aa).

Positions M1–K12 are enriched in pro residues. Disordered stretches follow at residues M1 to A31, T91 to R142, P156 to R483, Y510 to R554, and S607 to K629. Positions D18–A31 are enriched in basic and acidic residues. Over residues T91–N103 the composition is skewed to polar residues. S132 bears the Phosphoserine mark. Residues P156–S166 show a composition bias toward low complexity. Pro residues predominate over residues P187 to P205. Position 242 is a phosphoserine (S242). The span at L264–E291 shows a compositional bias: basic and acidic residues. Phosphoserine occurs at positions 322, 324, and 345. Composition is skewed to basic and acidic residues over residues R336–R401, R422–R433, P440–K468, and Y510–K528. Residue K360 forms a Glycyl lysine isopeptide (Lys-Gly) (interchain with G-Cter in SUMO2) linkage. S423 is modified (phosphoserine). Residues S532, S614, and S624 each carry the phosphoserine modification. Residues G613–P625 show a composition bias toward polar residues. T626 bears the Phosphothreonine mark. The residue at position 633 (S633) is a Phosphoserine. K637 participates in a covalent cross-link: Glycyl lysine isopeptide (Lys-Gly) (interchain with G-Cter in SUMO2). 4 positions are modified to phosphoserine: S697, S707, S743, and S753. Residues R729–E749 are disordered. Residue K775 forms a Glycyl lysine isopeptide (Lys-Gly) (interchain with G-Cter in SUMO2) linkage. 4 disordered regions span residues C829–D894, Q941–D974, E1015–D1078, and A1135–P1185. A compositionally biased stretch (basic and acidic residues) spans D830–K847. Residues S849–H858 are compositionally biased toward polar residues. Residues P867 to I883 are compositionally biased toward low complexity. A compositionally biased stretch (basic and acidic residues) spans L951–D974. Positions D1026 to D1037 are enriched in acidic residues. S1077 bears the Phosphoserine mark. Over residues S1150 to R1165 the composition is skewed to basic and acidic residues. A Phosphoserine modification is found at S1201. Disordered stretches follow at residues G1232–T1254, W1280–I1346, and N1366–Q1396. Polar residues-rich tracts occupy residues F1235–T1254 and R1319–N1329. Residues N1366–P1377 are compositionally biased toward basic and acidic residues. 3 positions are modified to phosphoserine: S1387, S1389, and S1391. The interval D1392–S1688 is interaction with TUBA1A. The AWS domain occupies I1468 to Q1522. 7 residues coordinate Zn(2+): C1473, C1475, C1490, C1494, C1503, C1507, and C1513. The 118-residue stretch at A1524–Q1641 folds into the SET domain. Residues K1534–W1536, H1577–Y1579, and N1602–H1603 each bind S-adenosyl-L-methionine. C1605 is a Zn(2+) binding site. One can recognise a Post-SET domain in the interval E1648–G1664. Q1650 contacts S-adenosyl-L-methionine. C1652 serves as a coordination point for Zn(2+). Residue F1653 participates in S-adenosyl-L-methionine binding. Residues C1654 and C1659 each contribute to the Zn(2+) site. 3 positions are modified to phosphoserine: S1670, S1818, and S1819. Residues T1806–K1848 form a disordered region. The segment covering S1818–D1833 has biased composition (polar residues). A phosphothreonine mark is found at T1827 and T1846. S1862 and S1926 each carry phosphoserine. Disordered stretches follow at residues S1914–D1981 and L1993–Q2110. Residues T1934 to E1946 show a composition bias toward basic and acidic residues. Positions T1947 to V1964 are enriched in acidic residues. Phosphoserine occurs at positions 1954, 1962, and 1969. 3 stretches are compositionally biased toward basic and acidic residues: residues E1965 to D1978, L1993 to A2020, and R2032 to K2045. 2 positions are modified to phosphoserine: S2053 and S2055. Basic and acidic residues-rich tracts occupy residues R2063–D2073 and K2084–Q2108. Residues S2090–M2119 are a coiled coil. The tract at residues Q2110–P2339 is low charge region. Residues I2362–W2395 enclose the WW domain. The interval L2412–E2438 is disordered. Residues T2430–E2537 are interaction with POLR2A.

Belongs to the class V-like SAM-binding methyltransferase superfamily. Histone-lysine methyltransferase family. SET2 subfamily. As to quaternary structure, specifically interacts with hyperphosphorylated C-terminal domain (CTD) of RNA polymerase II large subunit (POLR2A): binds to CTD heptad repeats doubly phosphorylated on 'Ser-2' and 'Ser-5' of each heptad. Interacts with HTT. Interacts with IWS1. Interacts with p53/TP53; leading to regulate p53/TP53 target genes. Component of a complex with HNRNPL. Interacts with TUBA1A; the interaction is independent on alpha-tubulin acetylation on 'Lys-40'. In terms of processing, may be automethylated.

The protein localises to the nucleus. The protein resides in the chromosome. The enzyme catalyses L-lysyl(36)-[histone H3] + 3 S-adenosyl-L-methionine = N(6),N(6),N(6)-trimethyl-L-lysyl(36)-[histone H3] + 3 S-adenosyl-L-homocysteine + 3 H(+). The catalysed reaction is L-lysyl-[protein] + S-adenosyl-L-methionine = N(6)-methyl-L-lysyl-[protein] + S-adenosyl-L-homocysteine + H(+). It carries out the reaction L-lysyl-[protein] + 3 S-adenosyl-L-methionine = N(6),N(6),N(6)-trimethyl-L-lysyl-[protein] + 3 S-adenosyl-L-homocysteine + 3 H(+). Its activity is regulated as follows. Specifically inhibited by sinefungin derivatives. Its function is as follows. Histone methyltransferase that specifically trimethylates 'Lys-36' of histone H3 (H3K36me3) using dimethylated 'Lys-36' (H3K36me2) as substrate. It is capable of trimethylating unmethylated H3K36 (H3K36me0) in vitro. Represents the main enzyme generating H3K36me3, a specific tag for epigenetic transcriptional activation. Plays a role in chromatin structure modulation during elongation by coordinating recruitment of the FACT complex and by interacting with hyperphosphorylated POLR2A. Acts as a key regulator of DNA mismatch repair in G1 and early S phase by generating H3K36me3, a mark required to recruit MSH6 subunit of the MutS alpha complex: early recruitment of the MutS alpha complex to chromatin to be replicated allows a quick identification of mismatch DNA to initiate the mismatch repair reaction. Required for DNA double-strand break repair in response to DNA damage: acts by mediating formation of H3K36me3, promoting recruitment of RAD51 and DNA repair via homologous recombination (HR). Acts as a tumor suppressor. H3K36me3 also plays an essential role in the maintenance of a heterochromatic state, by recruiting DNA methyltransferase DNMT3A. H3K36me3 is also enhanced in intron-containing genes, suggesting that SETD2 recruitment is enhanced by splicing and that splicing is coupled to recruitment of elongating RNA polymerase. Required during angiogenesis. Required for endoderm development by promoting embryonic stem cell differentiation toward endoderm: acts by mediating formation of H3K36me3 in distal promoter regions of FGFR3, leading to regulate transcription initiation of FGFR3. In addition to histones, also mediates methylation of other proteins, such as tubulins and STAT1. Trimethylates 'Lys-40' of alpha-tubulins such as TUBA1B (alpha-TubK40me3); alpha-TubK40me3 is required for normal mitosis and cytokinesis and may be a specific tag in cytoskeletal remodeling. Involved in interferon-alpha-induced antiviral defense by mediating both monomethylation of STAT1 at 'Lys-525' and catalyzing H3K36me3 on promoters of some interferon-stimulated genes (ISGs) to activate gene transcription. The polypeptide is Histone-lysine N-methyltransferase SETD2 (Mus musculus (Mouse)).